The following is an 88-amino-acid chain: UPF0298 protein Bcer98_2635 (88 aa).

It belongs to the UPF0298 family.

The protein resides in the cytoplasm. This Bacillus cytotoxicus (strain DSM 22905 / CIP 110041 / 391-98 / NVH 391-98) protein is UPF0298 protein Bcer98_2635.